The chain runs to 464 residues: Probable multidrug resistance protein NorM (464 aa).

12 helical membrane passes run 22-42 (LIKLALPAMGENVLQMLFGMA), 64-84 (VFWVVQVVLIAASMGATVTIA), 104-124 (FLAIFTGVILTALTPLSDVLI), 142-162 (LKVILSGSMGFSIMAVFSAML), 172-192 (MIVTGLTNFLNIFLDYAMIFG), 204-224 (AAVATILSRFVGAGILTYVIF), 258-278 (FVFSTGVLMFANILLIAGAEA), 288-308 (VESLSFMPAFGISVAITTLVG), 326-346 (GWILSLLFQVTVGIIIFLFPE), 358-378 (IIEISKLPVKIIGLFQFFLAI), 384-404 (GALRGTGNTLPPMIITFISIW), and 410-430 (VAFVMVKYFQLGLLGAWIGMI).

This sequence belongs to the multi antimicrobial extrusion (MATE) (TC 2.A.66.1) family.

It is found in the cell membrane. Functionally, multidrug efflux pump. The polypeptide is Probable multidrug resistance protein NorM (norM) (Thermotoga maritima (strain ATCC 43589 / DSM 3109 / JCM 10099 / NBRC 100826 / MSB8)).